Consider the following 452-residue polypeptide: Probable splicing factor, arginine/serine-rich 7 (452 aa).

RRM domains lie at Lys10–Pro91 and Arg163–Val240. The disordered stretch occupies residues Glu258–Glu452. Basic and acidic residues predominate over residues Glu259–Arg272. Residues Arg273 to Arg290 show a composition bias toward basic residues. Basic and acidic residues predominate over residues Asp291–Arg305. Basic residues-rich tracts occupy residues Lys323–Arg335, Lys345–Asp360, and Ser370–Ser382. Basic and acidic residues predominate over residues Arg383 to Ser421.

This sequence belongs to the splicing factor SR family. Extensively phosphorylated on serine residues in the RS domain.

It localises to the nucleus. The sequence is that of Probable splicing factor, arginine/serine-rich 7 (rsp-7) from Caenorhabditis elegans.